A 463-amino-acid chain; its full sequence is Siroheme synthase (463 aa).

Residues 1–203 (MDYLPLFHKL…GQGAEAERLL (203 aa)) form a precorrin-2 dehydrogenase /sirohydrochlorin ferrochelatase region. Residues 22–23 (EI) and 43–44 (PD) contribute to the NAD(+) site. Position 128 is a phosphoserine (serine 128). Residues 216–463 (GEVYLVGAGP…LAWFEGSQNS (248 aa)) are uroporphyrinogen-III C-methyltransferase. Proline 225 serves as a coordination point for S-adenosyl-L-methionine. Residue aspartate 248 is the Proton acceptor of the active site. The active-site Proton donor is lysine 270. Residues 301 to 303 (GGD), isoleucine 306, 331 to 332 (TA), methionine 383, and glycine 412 each bind S-adenosyl-L-methionine.

The protein in the N-terminal section; belongs to the precorrin-2 dehydrogenase / sirohydrochlorin ferrochelatase family. This sequence in the C-terminal section; belongs to the precorrin methyltransferase family.

The catalysed reaction is uroporphyrinogen III + 2 S-adenosyl-L-methionine = precorrin-2 + 2 S-adenosyl-L-homocysteine + H(+). The enzyme catalyses precorrin-2 + NAD(+) = sirohydrochlorin + NADH + 2 H(+). It catalyses the reaction siroheme + 2 H(+) = sirohydrochlorin + Fe(2+). The protein operates within cofactor biosynthesis; adenosylcobalamin biosynthesis; precorrin-2 from uroporphyrinogen III: step 1/1. Its pathway is cofactor biosynthesis; adenosylcobalamin biosynthesis; sirohydrochlorin from precorrin-2: step 1/1. It participates in porphyrin-containing compound metabolism; siroheme biosynthesis; precorrin-2 from uroporphyrinogen III: step 1/1. It functions in the pathway porphyrin-containing compound metabolism; siroheme biosynthesis; siroheme from sirohydrochlorin: step 1/1. The protein operates within porphyrin-containing compound metabolism; siroheme biosynthesis; sirohydrochlorin from precorrin-2: step 1/1. Its function is as follows. Multifunctional enzyme that catalyzes the SAM-dependent methylations of uroporphyrinogen III at position C-2 and C-7 to form precorrin-2 via precorrin-1. Then it catalyzes the NAD-dependent ring dehydrogenation of precorrin-2 to yield sirohydrochlorin. Finally, it catalyzes the ferrochelation of sirohydrochlorin to yield siroheme. The sequence is that of Siroheme synthase from Pseudomonas putida (strain ATCC 700007 / DSM 6899 / JCM 31910 / BCRC 17059 / LMG 24140 / F1).